A 166-amino-acid chain; its full sequence is NAD(P)H-quinone oxidoreductase subunit I, chloroplastic (166 aa).

2 4Fe-4S ferredoxin-type domains span residues 55–84 and 95–124; these read GRIH…VDWK and LNYS…MTEE. Residues Cys64, Cys67, Cys70, Cys74, Cys104, Cys107, Cys110, and Cys114 each contribute to the [4Fe-4S] cluster site.

Belongs to the complex I 23 kDa subunit family. In terms of assembly, NDH is composed of at least 16 different subunits, 5 of which are encoded in the nucleus. It depends on [4Fe-4S] cluster as a cofactor.

The protein resides in the plastid. It is found in the chloroplast thylakoid membrane. It catalyses the reaction a plastoquinone + NADH + (n+1) H(+)(in) = a plastoquinol + NAD(+) + n H(+)(out). It carries out the reaction a plastoquinone + NADPH + (n+1) H(+)(in) = a plastoquinol + NADP(+) + n H(+)(out). In terms of biological role, NDH shuttles electrons from NAD(P)H:plastoquinone, via FMN and iron-sulfur (Fe-S) centers, to quinones in the photosynthetic chain and possibly in a chloroplast respiratory chain. The immediate electron acceptor for the enzyme in this species is believed to be plastoquinone. Couples the redox reaction to proton translocation, and thus conserves the redox energy in a proton gradient. In Oxypappus scaber, this protein is NAD(P)H-quinone oxidoreductase subunit I, chloroplastic.